The following is an 835-amino-acid chain: Ribonucleoside-diphosphate reductase large subunit (835 aa).

Positions 1–39 (MPPRAPRPAGAVSPPFPPLAGPPLKARAPRARDSPLTSP) are disordered. Residues T262, 277–278 (SC), G308, 489–493 (NLCTE), and 666–670 (PTVSS) contribute to the substrate site. Cysteines 278 and 506 form a disulfide. The active-site Proton acceptor is the N489. C491 acts as the Cysteine radical intermediate in catalysis. Residue E493 is the Proton acceptor of the active site.

This sequence belongs to the ribonucleoside diphosphate reductase large chain family. As to quaternary structure, heterotetramer composed of a homodimer of the large subunit (R1) and a homodimer of the small subunit (R2). Larger multisubunit protein complex are also active, composed of (R1)n(R2)n.

The enzyme catalyses a 2'-deoxyribonucleoside 5'-diphosphate + [thioredoxin]-disulfide + H2O = a ribonucleoside 5'-diphosphate + [thioredoxin]-dithiol. Its function is as follows. Ribonucleoside-diphosphate reductase holoenzyme provides the precursors necessary for viral DNA synthesis. Allows virus growth in non-dividing cells, as well as reactivation from latency in infected hosts. Catalyzes the biosynthesis of deoxyribonucleotides from the corresponding ribonucleotides. In Suid herpesvirus 1 (strain Kaplan) (SuHV-1), this protein is Ribonucleoside-diphosphate reductase large subunit.